The sequence spans 233 residues: PEP2-like protein NECHADRAFT_97050 (233 aa).

Belongs to the PEP2 family.

In terms of biological role, may contribute to the ability of the fungus to cause disease on pea plants. The chain is PEP2-like protein NECHADRAFT_97050 from Fusarium vanettenii (strain ATCC MYA-4622 / CBS 123669 / FGSC 9596 / NRRL 45880 / 77-13-4) (Fusarium solani subsp. pisi).